Consider the following 360-residue polypeptide: 3-dehydroquinate synthase (360 aa).

Residues 105–109, 129–130, Lys-142, Lys-151, and 169–172 contribute to the NAD(+) site; these read GVVGD, TT, and TLKT. Residues Glu-184, His-247, and His-263 each coordinate Zn(2+).

This sequence belongs to the sugar phosphate cyclases superfamily. Dehydroquinate synthase family. Co(2+) serves as cofactor. The cofactor is Zn(2+). NAD(+) is required as a cofactor.

The protein resides in the cytoplasm. It carries out the reaction 7-phospho-2-dehydro-3-deoxy-D-arabino-heptonate = 3-dehydroquinate + phosphate. Its pathway is metabolic intermediate biosynthesis; chorismate biosynthesis; chorismate from D-erythrose 4-phosphate and phosphoenolpyruvate: step 2/7. Its function is as follows. Catalyzes the conversion of 3-deoxy-D-arabino-heptulosonate 7-phosphate (DAHP) to dehydroquinate (DHQ). This chain is 3-dehydroquinate synthase, found in Acetivibrio thermocellus (strain ATCC 27405 / DSM 1237 / JCM 9322 / NBRC 103400 / NCIMB 10682 / NRRL B-4536 / VPI 7372) (Clostridium thermocellum).